We begin with the raw amino-acid sequence, 387 residues long: Mannitol-1-phosphate 5-dehydrogenase (387 aa).

3–14 contributes to the NAD(+) binding site; that stretch reads ALHFGAGNIGRG.

This sequence belongs to the mannitol dehydrogenase family.

The catalysed reaction is D-mannitol 1-phosphate + NAD(+) = beta-D-fructose 6-phosphate + NADH + H(+). The polypeptide is Mannitol-1-phosphate 5-dehydrogenase (Yersinia pseudotuberculosis serotype O:3 (strain YPIII)).